A 658-amino-acid chain; its full sequence is Serine/threonine-protein kinase shk1/pak1 (658 aa).

Disordered stretches follow at residues 1–21 (MERG…ITPI), 39–104 (RKLK…SYDE), 126–147 (GGSS…STVI), and 213–365 (GAKP…QQSN). A compositionally biased stretch (polar residues) spans 66–98 (PLSQSRTTVSRVSLGSRQHSSSSIRKLQTNVSD). Positions 129–140 (SPTSSYGSGSAS) are enriched in low complexity. Positions 147–160 (ISSPFDPKHVTHVG) constitute a CRIB domain. 2 stretches are compositionally biased toward low complexity: residues 226-254 (PLLS…LYPS) and 262-272 (ASSSSSPLLSS). A compositionally biased stretch (polar residues) spans 273-300 (QTVKTTTSNASRQPSPLVSSKSTDNIIR). A phosphoserine mark is found at Ser-301 and Ser-303. The 252-residue stretch at 386-637 (YRNFVKIGQG…SGELLRHPFL (252 aa)) folds into the Protein kinase domain. ATP-binding positions include 392 to 400 (IGQGASGDV) and Lys-415. The active-site Proton acceptor is the Asp-505.

This sequence belongs to the protein kinase superfamily. STE Ser/Thr protein kinase family. STE20 subfamily. Forms an activated complex with GTP-bound ras-like cdc42. Interacts with skb1 and the SH3 domain of skb5 via its amino-terminal regulatory domain. Skb1, cdc42 and shk1 are able to form a ternary complex in vivo. Interacts with rga8 and may interact with byr2. Autophosphorylated on serine residues.

Its subcellular location is the cytoplasm. The protein resides in the cytoskeleton. The protein localises to the spindle. The enzyme catalyses L-seryl-[protein] + ATP = O-phospho-L-seryl-[protein] + ADP + H(+). It catalyses the reaction L-threonyl-[protein] + ATP = O-phospho-L-threonyl-[protein] + ADP + H(+). Functionally, MAP4K component of the MAPK pathway required for the mating pheromone response. Phosphorylates histone H2B to form H2BS10ph. Phosphorylates tea1. Required for skb1-dependent mitotic inhibitory function. Regulates microtubule dynamics and cell polarity. In Schizosaccharomyces pombe (strain 972 / ATCC 24843) (Fission yeast), this protein is Serine/threonine-protein kinase shk1/pak1 (shk1).